Reading from the N-terminus, the 355-residue chain is UDP-N-acetylglucosamine--N-acetylmuramyl-(pentapeptide) pyrophosphoryl-undecaprenol N-acetylglucosamine transferase (355 aa).

UDP-N-acetyl-alpha-D-glucosamine contacts are provided by residues 12-14, N124, R160, S192, I243, 262-267, and Q287; these read TGG and ALTVCE.

It belongs to the glycosyltransferase 28 family. MurG subfamily.

Its subcellular location is the cell inner membrane. It carries out the reaction di-trans,octa-cis-undecaprenyl diphospho-N-acetyl-alpha-D-muramoyl-L-alanyl-D-glutamyl-meso-2,6-diaminopimeloyl-D-alanyl-D-alanine + UDP-N-acetyl-alpha-D-glucosamine = di-trans,octa-cis-undecaprenyl diphospho-[N-acetyl-alpha-D-glucosaminyl-(1-&gt;4)]-N-acetyl-alpha-D-muramoyl-L-alanyl-D-glutamyl-meso-2,6-diaminopimeloyl-D-alanyl-D-alanine + UDP + H(+). It functions in the pathway cell wall biogenesis; peptidoglycan biosynthesis. Cell wall formation. Catalyzes the transfer of a GlcNAc subunit on undecaprenyl-pyrophosphoryl-MurNAc-pentapeptide (lipid intermediate I) to form undecaprenyl-pyrophosphoryl-MurNAc-(pentapeptide)GlcNAc (lipid intermediate II). This chain is UDP-N-acetylglucosamine--N-acetylmuramyl-(pentapeptide) pyrophosphoryl-undecaprenol N-acetylglucosamine transferase, found in Haemophilus ducreyi (strain 35000HP / ATCC 700724).